Here is a 454-residue protein sequence, read N- to C-terminus: MEKFTKMGPMTTTSETERYPRIALISTHGYVAAHPPLGAADTGGQVVYVLELARKLGQLGYTVDLYTRRFEDQPEFDEVDERVRVVRIPCGGRDFIPKEYLHRHLMEWCENALRFIKKNDLNYSFINSHYWDAGVAGQRLSEALKIPHLHTPHSLGIWKKRQMETDYPEKADTFELEFNFKERIQHELIIYRSCDMVIATTPVQLDVLIEDYGLKRKHIHMIPPGYDDNRFFPVSDATRQMIRQRFGFEGKVVLALGRLATNKGYDLLIDGFSVLAEREPEARLHLAVGGENMDEQETTILNQLKERVKSLGLEDKVAFSGYVADEDLPDIYRAADLFVLSSRYEPFGMTAIEAMASGTPTVVTIHGGLFRAISYGRHALFADPFDKEDLGITMMKPFKHERLYGRLSRMGAHKARSLFTWTGIAQQLLALVEGRTMMPVLEEADWAEPWNDGD.

This sequence belongs to the glycosyltransferase 1 family. The cofactor is Mg(2+). Mn(2+) serves as cofactor.

The enzyme catalyses beta-D-fructose 6-phosphate + GDP-alpha-D-mannose = beta-D-fructofuranosyl alpha-D-mannopyranoside 6(F)-phosphate + GDP + H(+). It functions in the pathway carbohydrate metabolism; mannosylfructose biosynthesis; beta-D-fructofuranosyl alpha-D-mannopyranoside from D-fructose 6-phosphate and GDP-alpha-D-mannose: step 1/2. The chain is Mannosylfructose-phosphate synthase from Agrobacterium fabrum (strain C58 / ATCC 33970) (Agrobacterium tumefaciens (strain C58)).